The primary structure comprises 282 residues: tRNA N(3)-cytidine methyltransferase METTL6 (282 aa).

Residues W45, Y49, G87, D110, D136, L137, and I157 each contribute to the S-adenosyl-L-methionine site.

Belongs to the methyltransferase superfamily. METL family. Monomer. Interacts with SARS1/SerRS; interaction is mediated via tRNA(Ser) and is required for N(3)-methylcytidine methylation.

Its subcellular location is the cytoplasm. It is found in the nucleus. The catalysed reaction is cytidine(32) in tRNA(Ser) + S-adenosyl-L-methionine = N(3)-methylcytidine(32) in tRNA(Ser) + S-adenosyl-L-homocysteine + H(+). In terms of biological role, S-adenosyl-L-methionine-dependent methyltransferase that mediates N(3)-methylcytidine modification of residue 32 of the tRNA anticodon loop of tRNA(Ser), including tRNA(Ser)(UGA) and tRNA(Ser)(GCU). Interaction with SARS1/SerRS is required for N(3)-methylcytidine methylation. The chain is tRNA N(3)-cytidine methyltransferase METTL6 from Mus musculus (Mouse).